The chain runs to 192 residues: Phosphoheptose isomerase (192 aa).

Residues 35–192 (LIETLENQGK…CIERHFAHKN (158 aa)) enclose the SIS domain. 50–52 (NGG) is a binding site for substrate. Zn(2+) is bound by residues His59 and Glu63. Residues Glu63, 92-93 (ND), 118-120 (STS), Ser123, and Gln170 each bind substrate. Positions 170 and 178 each coordinate Zn(2+).

This sequence belongs to the SIS family. GmhA subfamily. Homotetramer. Requires Zn(2+) as cofactor.

Its subcellular location is the cytoplasm. It carries out the reaction 2 D-sedoheptulose 7-phosphate = D-glycero-alpha-D-manno-heptose 7-phosphate + D-glycero-beta-D-manno-heptose 7-phosphate. It functions in the pathway carbohydrate biosynthesis; D-glycero-D-manno-heptose 7-phosphate biosynthesis; D-glycero-alpha-D-manno-heptose 7-phosphate and D-glycero-beta-D-manno-heptose 7-phosphate from sedoheptulose 7-phosphate: step 1/1. Catalyzes the isomerization of sedoheptulose 7-phosphate in D-glycero-D-manno-heptose 7-phosphate. This chain is Phosphoheptose isomerase, found in Helicobacter pylori (strain HPAG1).